The sequence spans 1072 residues: Zn(2)-C6 fungal-type transcription factor FTF1a (1072 aa).

A DNA-binding region (zn(2)-C6 fungal-type) is located at residues 178–205 (CMACRRKKIRCSGEKPACKHCLRSRILC).

It is found in the nucleus. In terms of biological role, zn(2)-C6 fungal-type transcription factor that has a role in the establishment of the fungus within the plant and/or the progress of the disease. Regulates the expression of virulence factors such as SIX1 and SIX6. The protein is Zn(2)-C6 fungal-type transcription factor FTF1a of Fusarium oxysporum f. sp. lycopersici (strain 4287 / CBS 123668 / FGSC 9935 / NRRL 34936) (Fusarium vascular wilt of tomato).